Here is a 397-residue protein sequence, read N- to C-terminus: Lysophospholipid transporter LplT (397 aa).

The Periplasmic segment spans residues 1–17 (MSESVHTNTSLWSKGMK). The helical transmembrane segment at 18 to 38 (AVIVAQFLSAFGDNALLFATL) threads the bilayer. The Cytoplasmic portion of the chain corresponds to 39–52 (ALLKAQFYPEWSQP). Residues 53 to 73 (ILQMVFVGAYILFAPFVGQVA) traverse the membrane as a helical segment. Topologically, residues 74–90 (DSFAKGRVMMFANGLKL) are periplasmic. The helical transmembrane segment at 91-111 (LGAASICFGINPFLGYTLVGV) threads the bilayer. Residues 112–144 (GAAAYSPAKYGILGELTTGSKLVKANGLMEAST) are Cytoplasmic-facing. The helical transmembrane segment at 145–165 (IAAILLGSVAGGVLADWHVLV) threads the bilayer. Position 166 (Ala-166) is a topological domain, periplasmic. Residues 167-187 (LAACALAYGGAVVANIYIPKL) form a helical membrane-spanning segment. At 188–226 (AAARPGQSWNLINMTRSFLNACTSLWRNGETRFSLVGTS) the chain is on the cytoplasmic side. A helical transmembrane segment spans residues 227-247 (LFWGAGVTLRFLLVLWVPVAL). Residues 248 to 256 (GITDNSTPT) are Periplasmic-facing. A helical transmembrane segment spans residues 257–277 (YLNAMVAIGIVVGAGAAAKLV). Residues 278–280 (TLE) lie on the Cytoplasmic side of the membrane. Residues 281-301 (TVSRCMPAGILIGVVVLIFSL) form a helical membrane-spanning segment. At 302 to 304 (QHE) the chain is on the periplasmic side. The helical transmembrane segment at 305-325 (LLPAYALLMLIGVMGGFFVVP) threads the bilayer. Topologically, residues 326–343 (LNALLQERGKKSVGAGNA) are cytoplasmic. The chain crosses the membrane as a helical span at residues 344–364 (IAVQNLGENSAMLLMLGIYSL). Residues 365 to 366 (AV) are Periplasmic-facing. A helical transmembrane segment spans residues 367–387 (MVGIPVVPIGIGFGALFALAI). At 388–397 (TALWIWQRRH) the chain is on the cytoplasmic side.

The protein belongs to the major facilitator superfamily. LplT (TC 2.A.1.42) family.

The protein localises to the cell inner membrane. Catalyzes the facilitated diffusion of 2-acyl-glycero-3-phosphoethanolamine (2-acyl-GPE) into the cell. The protein is Lysophospholipid transporter LplT of Shigella boydii serotype 4 (strain Sb227).